The primary structure comprises 234 residues: bZIP transcription factor 27 (234 aa).

Residues 152-159 (KKRGQDSD) carry the Nuclear localization signal motif. Positions 163-213 (GDRRYKRMIKNRESAARSRARKQAYTNELELEIAHLQTENARLKIQQEQLK) constitute a bZIP domain. Residues 165-184 (RRYKRMIKNRESAARSRARK) are basic motif. Residues 191–212 (LELEIAHLQTENARLKIQQEQL) are leucine-zipper. Phosphothreonine is present on threonine 231.

This sequence belongs to the bZIP family. As to quaternary structure, self-interacts. Interacts with FT and FD/BZIP14. Interacts with CPK33. Post-translationally, phosphorylated. In terms of tissue distribution, expressed on the flanks of the shoot apex.

The protein resides in the nucleus. In terms of biological role, transcription factor required for the transition to flowering promoted by FT. The polypeptide is bZIP transcription factor 27 (Arabidopsis thaliana (Mouse-ear cress)).